Consider the following 142-residue polypeptide: ATP synthase epsilon chain (142 aa).

Belongs to the ATPase epsilon chain family. As to quaternary structure, F-type ATPases have 2 components, CF(1) - the catalytic core - and CF(0) - the membrane proton channel. CF(1) has five subunits: alpha(3), beta(3), gamma(1), delta(1), epsilon(1). CF(0) has three main subunits: a, b and c.

Its subcellular location is the cell inner membrane. Produces ATP from ADP in the presence of a proton gradient across the membrane. This is ATP synthase epsilon chain from Shewanella baltica (strain OS155 / ATCC BAA-1091).